We begin with the raw amino-acid sequence, 362 residues long: Chorismate synthase (362 aa).

An NADP(+)-binding site is contributed by arginine 47. FMN-binding positions include 124 to 126, glycine 286, 301 to 305, and arginine 327; these read RSS and KPTAT.

The protein belongs to the chorismate synthase family. As to quaternary structure, homotetramer. The cofactor is FMNH2.

The catalysed reaction is 5-O-(1-carboxyvinyl)-3-phosphoshikimate = chorismate + phosphate. Its pathway is metabolic intermediate biosynthesis; chorismate biosynthesis; chorismate from D-erythrose 4-phosphate and phosphoenolpyruvate: step 7/7. In terms of biological role, catalyzes the anti-1,4-elimination of the C-3 phosphate and the C-6 proR hydrogen from 5-enolpyruvylshikimate-3-phosphate (EPSP) to yield chorismate, which is the branch point compound that serves as the starting substrate for the three terminal pathways of aromatic amino acid biosynthesis. This reaction introduces a second double bond into the aromatic ring system. The sequence is that of Chorismate synthase from Synechococcus sp. (strain ATCC 27144 / PCC 6301 / SAUG 1402/1) (Anacystis nidulans).